The chain runs to 147 residues: Ribonuclease 4 (147 aa).

The signal sequence occupies residues 1–28; that stretch reads MALQRTHSLLLLLLLTLLGLGLVQPSYG. Pyrrolidone carboxylic acid is present on Gln-29. Arg-35, His-40, Lys-68, Asn-71, and Thr-72 together coordinate dUMP. His-40 acts as the Proton acceptor in catalysis. Cystine bridges form between Cys-53/Cys-109, Cys-67/Cys-120, Cys-85/Cys-135, and Cys-92/Cys-99. Residue His-144 is the Proton donor of the active site. Phe-145 is a dUMP binding site.

Belongs to the pancreatic ribonuclease family. In terms of tissue distribution, expressed in the cortical and medullary tubules of the kidney, and in the transitional epithelium of the urinary bladder (at protein level).

The protein localises to the secreted. In terms of biological role, cleaves preferentially after uridine bases. Has antimicrobial activity against uropathogenic E.coli (UPEC). Probably contributes to urinary tract sterility. The chain is Ribonuclease 4 (RNASE4) from Homo sapiens (Human).